The primary structure comprises 657 residues: Serine/threonine-protein kinase BUR1 (657 aa).

In terms of domain architecture, Protein kinase spans 60-366 (YREDEKLGQG…AMSAKHHPWF (307 aa)). Residues 66-74 (LGQGTFGEV) and Lys89 each bind ATP. The active-site Proton acceptor is the Asp195. Thr240 is modified (phosphothreonine; by CAK). Phosphoserine is present on Ser400. Thr405 carries the post-translational modification Phosphothreonine. The interval 414 to 657 (KGESPVVKNL…FQNSDIADLY (244 aa)) is disordered. Ser417 is modified (phosphoserine). The segment covering 489–501 (NNSSRNNRFSGNS) has biased composition (low complexity). 3 stretches are compositionally biased toward polar residues: residues 535–552 (SRYQGNSNESRYKNSPND), 564–595 (PETNFNRQPQKYSRQESNAPINKNYNPSNGSR), and 614–625 (ISPSQGQHQLTS). Positions 627 to 649 (PIEKKNGSFKDERAKPDESKEFQ) are enriched in basic and acidic residues. Position 634 is a phosphoserine (Ser634).

This sequence belongs to the protein kinase superfamily. CMGC Ser/Thr protein kinase family. CDC2/CDKX subfamily. In terms of assembly, belongs to the BUR kinase complex composed of SGV1/BUR1 and BUR2. Interacts with BUR2 and RBP1.

Its subcellular location is the nucleus. It catalyses the reaction L-seryl-[protein] + ATP = O-phospho-L-seryl-[protein] + ADP + H(+). It carries out the reaction L-threonyl-[protein] + ATP = O-phospho-L-threonyl-[protein] + ADP + H(+). The catalysed reaction is [DNA-directed RNA polymerase] + ATP = phospho-[DNA-directed RNA polymerase] + ADP + H(+). Functionally, serine/threonine-protein kinase component of the BUR kinase complex involved in transcription regulation. This complex phosphorylates 'Ser-120' of the UBC2/RAD6 ubiquitin-conjugating enzyme (E2), leading to monoubiquitination of histone H2B, the localization of the PAF1 complex to the chromatin, and the silencing of telomeric-associated genes. Also required for histone H3 'Lys-4' trimethylation. May phosphorylate the 'Ser-5' of the RBP1 carboxy-terminal domain (CTD) repeats. Necessary for the recovery from pheromone-induced growth arrest in the cell cycle G1 phase. The kinase activity of the complex requires the presence of BUR2. The sequence is that of Serine/threonine-protein kinase BUR1 (SGV1) from Saccharomyces cerevisiae (strain ATCC 204508 / S288c) (Baker's yeast).